Reading from the N-terminus, the 133-residue chain is Large ribosomal subunit protein uL14m (133 aa).

The protein belongs to the universal ribosomal protein uL14 family. Probably part of the large ribosomal subunit.

It localises to the hydrogenosome. This is Large ribosomal subunit protein uL14m (rpl14) from Nyctotherus ovalis.